Here is a 247-residue protein sequence, read N- to C-terminus: MSKLFWAMLAFISRLPVPSRWSQGLDFEQYSRGIVMFPFIGLILGGISGLIFILLQSWCGIPLAALFCILALALLTGGFHLDGLADTCDGIFSARRRERMLEIMRDSRLGTHGGLALIFVLLAKILVVSELALRGTPMLAALAVACAAGHGSAVLLMYRHRYAREEGLGNVFIGKVSGRQTCITLGLAVIVATVLLPGMQGLATMVVTLAAIFILGQLLKRTLGGQTGDTLGAAIELGELIFLLALL.

6 helical membrane-spanning segments follow: residues 34 to 54 (IVMF…IFIL), 59 to 79 (CGIP…TGGF), 113 to 133 (GGLA…ELAL), 138 to 158 (MLAA…LLMY), 171 to 191 (VFIG…AVIV), and 194 to 214 (VLLP…AIFI).

The protein belongs to the CobS family. The cofactor is Mg(2+).

It localises to the cell inner membrane. The catalysed reaction is alpha-ribazole + adenosylcob(III)inamide-GDP = adenosylcob(III)alamin + GMP + H(+). It catalyses the reaction alpha-ribazole 5'-phosphate + adenosylcob(III)inamide-GDP = adenosylcob(III)alamin 5'-phosphate + GMP + H(+). The protein operates within cofactor biosynthesis; adenosylcobalamin biosynthesis; adenosylcobalamin from cob(II)yrinate a,c-diamide: step 7/7. Functionally, joins adenosylcobinamide-GDP and alpha-ribazole to generate adenosylcobalamin (Ado-cobalamin). Also synthesizes adenosylcobalamin 5'-phosphate from adenosylcobinamide-GDP and alpha-ribazole 5'-phosphate. This Salmonella paratyphi A (strain ATCC 9150 / SARB42) protein is Adenosylcobinamide-GDP ribazoletransferase.